A 143-amino-acid chain; its full sequence is Transcriptional regulator MraZ (143 aa).

SpoVT-AbrB domains follow at residues 5–47 (TYTP…PKEE) and 76–119 (ADEQ…DAQA).

The protein belongs to the MraZ family. As to quaternary structure, forms oligomers.

The protein resides in the cytoplasm. The protein localises to the nucleoid. The protein is Transcriptional regulator MraZ of Corynebacterium efficiens (strain DSM 44549 / YS-314 / AJ 12310 / JCM 11189 / NBRC 100395).